A 778-amino-acid chain; its full sequence is Receptor like protein 28 (778 aa).

The signal sequence occupies residues 1–24; sequence MSGSHLRLRFLSLLLLCCVSSSTS. At 25–739 the chain is on the extracellular side; sequence SLFTFSYPVL…EEQEQVLNWK (715 aa). N-linked (GlcNAc...) asparagine glycans are attached at residues Asn-60, Asn-72, Asn-93, Asn-106, Asn-111, Asn-147, Asn-170, and Asn-173. 5 LRR repeats span residues 99–123, 125–147, 148–171, 172–195, and 197–219; these read FHQL…EFGN, NKVE…SFSN, LSQL…VQNL, TNLS…LLMM, and FLSY…TSSK. The LRR 6; degenerate repeat unit spans residues 220–240; sequence LEILYLGLKPFEGQILEPISK. LRR repeat units lie at residues 241–265, 266–291, 293–313, 314–338, 340–363, and 364–387; these read LINL…LFSS, LKSL…LYIP, TLEK…ILKT, LQKL…LWRL, RLRS…VLVN, and SSME…PLSI. Residue Asn-253 is glycosylated (N-linked (GlcNAc...) asparagine). N-linked (GlcNAc...) asparagine glycans are attached at residues Asn-348 and Asn-363. The stretch at 388-407 is one LRR 13; degenerate repeat; that stretch reads KAFSAGYNNFSGEIPLSICN. Asn-396, Asn-407, Asn-420, Asn-431, and Asn-476 each carry an N-linked (GlcNAc...) asparagine glycan. LRR repeat units lie at residues 408-429, 430-453, 455-477, 479-500, 501-525, 528-552, 601-625, 626-649, 650-673, and 678-700; these read RSSL…PQCL, SNLT…LCAG, SLQT…LLNC, SLEF…WLKA, LPNL…HQSP, FPEL…YFVN, LNSY…IGLL, KELI…LANA, TELE…LKTL, and YINV…SSFE. Asn-632 and Asn-648 each carry an N-linked (GlcNAc...) asparagine glycan. Asn-680 carries N-linked (GlcNAc...) asparagine glycosylation. The chain crosses the membrane as a helical span at residues 740–760; it reads AVATGYGTGLLLGLAIAQVIA. Topologically, residues 761-778 are cytoplasmic; the sequence is SYKPDWLVKIIGLFRFCF.

This sequence belongs to the RLP family.

The protein resides in the cell membrane. This Arabidopsis thaliana (Mouse-ear cress) protein is Receptor like protein 28.